The sequence spans 3970 residues: Polyketide synthase-nonribosomal peptide synthetase hybrid himA (3970 aa).

Residues 8–443 (SEPIAIIGSA…GTNSHAILES (436 aa)) enclose the Ketosynthase family 3 (KS3) domain. Active-site for beta-ketoacyl synthase activity residues include Cys-181, His-320, and His-363. Residues 561–876 (IFTGQGAQWP…PYAGLLHRGR (316 aa)) form a malonyl-CoA:ACP transacylase (MAT) domain region. Residues 949-1083 (HELLGVRTSD…GMVHLHLGEP (135 aa)) are N-terminal hotdog fold. The interval 949–1253 (HELLGVRTSD…GLTVVALSST (305 aa)) is dehydratase (DH) domain. One can recognise a PKS/mFAS DH domain in the interval 949–1256 (HELLGVRTSD…VVALSSTGPA (308 aa)). The active-site Proton acceptor; for dehydratase activity is the His-981. The segment at 1098–1256 (GLNRVDLDEF…VVALSSTGPA (159 aa)) is C-terminal hotdog fold. Asp-1158 serves as the catalytic Proton donor; for dehydratase activity. Positions 2060-2234 (TYVMIGLTGE…ASVLDIGMVS (175 aa)) are ketoreductase (KR) domain. In terms of domain architecture, Carrier 1 spans 2342–2419 (AIAAILTESF…TLAEEVAKEL (78 aa)). Residue Ser-2379 is modified to O-(pantetheine 4'-phosphoryl)serine. Positions 2420-2482 (FEDRSTSAPP…NDDSDPTAQC (63 aa)) are disordered. Positions 2445 to 2466 (GSSTDPSSNSDSKSGFDGFSSD) are enriched in low complexity. A compositionally biased stretch (acidic residues) spans 2467–2477 (DSSDIANDDSD). Positions 2487–2919 (PMSLSQARMW…ATTPTERVAT (433 aa)) are condensation (C) domain. An adenylation (A) domain region spans residues 2974-3381 (SYKAMSDRVN…LGDIANAILK (408 aa)). Residues 3466-3495 (RPLPASGDEDGDEDTETETGADADADAGAD) are disordered. The span at 3472–3492 (GDEDGDEDTETETGADADADA) shows a compositional bias: acidic residues. In terms of domain architecture, Carrier 2 spans 3496-3574 (TTLSDIHSKL…AIAERILRGV (79 aa)). Ser-3534 is modified (O-(pantetheine 4'-phosphoryl)serine). The interval 3633-3866 (LTGATGFLGR…FIRVETVAEE (234 aa)) is reductase (R) domain.

It in the C-terminal section; belongs to the NRP synthetase family.

It participates in secondary metabolite biosynthesis. Polyketide synthase-nonribosomal peptide synthetase hybrid; part of the him gene cluster that mediates the biosynthesis of himeic acid A, a ubiquitin-activating enzyme (E1) inhibitor. First, himA, together with the trans-enoyl reductase himH, catalyzes the formation of apolyketide chain, which is then condensed with leucine by the NRPS activity of himA. Dieckmann cyclization and release from himA gives a tetramic acid intermediate as the product of himA PKS-NRPS. HimG then catalyzes alpha-oxidation of the tetramic acid ring, with a subsequent rearrangement to yield apyrone intermediate. Two terminal methyl groups of polyketide and amide side chains are oxidized to carboxylic acids by himC cytochrome P450 monooxygenase to form himeic acid A. Himeic acid A is further converted to himeic acids B and C during culture growth. No gene responsible for pyrone to pyridone conversion was found in the him gene cluster and himeic acid A is non-enzymatically converted to himeic acid C by the incorporation of an ammonium nitrogen atom in a pH5 buffer, and to himeic acid B at a conversion ratio of 50% during incubation in MeOH for 5 days. The polypeptide is Polyketide synthase-nonribosomal peptide synthetase hybrid himA (Aspergillus japonicus).